Here is a 299-residue protein sequence, read N- to C-terminus: Glutamyl-Q tRNA(Asp) synthetase (299 aa).

Residues 18–22 (RFAPS) and Glu-54 contribute to the L-glutamate site. The 'HIGH' region signature appears at 21 to 31 (PSPSGALHFGS). Residues Cys-110, Cys-112, Tyr-124, and Cys-128 each contribute to the Zn(2+) site. Positions 181 and 199 each coordinate L-glutamate. Positions 237–241 (KLSKQ) match the 'KMSKS' region motif. Lys-240 lines the ATP pocket.

The protein belongs to the class-I aminoacyl-tRNA synthetase family. GluQ subfamily. It depends on Zn(2+) as a cofactor.

Its function is as follows. Catalyzes the tRNA-independent activation of glutamate in presence of ATP and the subsequent transfer of glutamate onto a tRNA(Asp). Glutamate is transferred on the 2-amino-5-(4,5-dihydroxy-2-cyclopenten-1-yl) moiety of the queuosine in the wobble position of the QUC anticodon. The protein is Glutamyl-Q tRNA(Asp) synthetase of Shewanella oneidensis (strain ATCC 700550 / JCM 31522 / CIP 106686 / LMG 19005 / NCIMB 14063 / MR-1).